A 298-amino-acid polypeptide reads, in one-letter code: Bifunctional protein FolD (298 aa).

Residues 165–167 (GRS), S190, and I231 contribute to the NADP(+) site.

This sequence belongs to the tetrahydrofolate dehydrogenase/cyclohydrolase family. As to quaternary structure, homodimer.

It carries out the reaction (6R)-5,10-methylene-5,6,7,8-tetrahydrofolate + NADP(+) = (6R)-5,10-methenyltetrahydrofolate + NADPH. The enzyme catalyses (6R)-5,10-methenyltetrahydrofolate + H2O = (6R)-10-formyltetrahydrofolate + H(+). It functions in the pathway one-carbon metabolism; tetrahydrofolate interconversion. In terms of biological role, catalyzes the oxidation of 5,10-methylenetetrahydrofolate to 5,10-methenyltetrahydrofolate and then the hydrolysis of 5,10-methenyltetrahydrofolate to 10-formyltetrahydrofolate. This Prochlorococcus marinus (strain MIT 9312) protein is Bifunctional protein FolD.